The following is a 357-amino-acid chain: DNA polymerase IV (357 aa).

The UmuC domain maps to 4–185 (IIHCDCDCFY…LPVERLFGVG (182 aa)). Residues Asp-8 and Asp-103 each contribute to the Mg(2+) site. Glu-104 is a catalytic residue.

This sequence belongs to the DNA polymerase type-Y family. As to quaternary structure, monomer. Mg(2+) serves as cofactor.

The protein resides in the cytoplasm. It catalyses the reaction DNA(n) + a 2'-deoxyribonucleoside 5'-triphosphate = DNA(n+1) + diphosphate. Functionally, poorly processive, error-prone DNA polymerase involved in untargeted mutagenesis. Copies undamaged DNA at stalled replication forks, which arise in vivo from mismatched or misaligned primer ends. These misaligned primers can be extended by PolIV. Exhibits no 3'-5' exonuclease (proofreading) activity. May be involved in translesional synthesis, in conjunction with the beta clamp from PolIII. The protein is DNA polymerase IV of Ralstonia nicotianae (strain ATCC BAA-1114 / GMI1000) (Ralstonia solanacearum).